The sequence spans 454 residues: Sensor histidine kinase RppB (454 aa).

At 1–13 the chain is on the periplasmic side; it reads MNTRRLFARSRLQ. Residues 14–34 form a helical membrane-spanning segment; sequence LAFWYALVMGGILTLLGLGVY. Over 35 to 186 the chain is Cytoplasmic; that stretch reads RAIVQANWMA…LAAFDAENKR (152 aa). A helical membrane pass occupies residues 187–207; that stretch reads ILWILGLSFPIALGLVAFSSW. The Periplasmic segment spans residues 208–454; sequence GLAGLAMRPI…PIFSVPIVHS (247 aa). One can recognise a Histidine kinase domain in the interval 230–448; that stretch reads NAAHELRSPL…LFTIQLPIFS (219 aa). Position 233 is a phosphohistidine; by autocatalysis (histidine 233).

Its subcellular location is the cell inner membrane. The catalysed reaction is ATP + protein L-histidine = ADP + protein N-phospho-L-histidine.. Member of two-component regulatory system RppA/RppB, involved in the establishment of the appropriate stoichiometry between the 2 photosystems. It senses changes in the plastoquinone (PQ) redox poise. Another group shows this two-component pair, renamed NrsR/NrsS, controls the nickel-dependent expression of the nrsBACD operon; they suggest the photosystem-related activities seen earlier are due to the expression of NrsS (RppB) in the absence of its natural substrate NrsR (RppA). The polypeptide is Sensor histidine kinase RppB (Synechocystis sp. (strain ATCC 27184 / PCC 6803 / Kazusa)).